A 221-amino-acid polypeptide reads, in one-letter code: Transcription antitermination protein NusB (221 aa).

The protein belongs to the NusB family.

Involved in transcription antitermination. Required for transcription of ribosomal RNA (rRNA) genes. Binds specifically to the boxA antiterminator sequence of the ribosomal RNA (rrn) operons. The chain is Transcription antitermination protein NusB from Synechocystis sp. (strain ATCC 27184 / PCC 6803 / Kazusa).